A 1070-amino-acid polypeptide reads, in one-letter code: DNA-directed RNA polymerase subunit beta (1070 aa).

The protein belongs to the RNA polymerase beta chain family. In plastids the minimal PEP RNA polymerase catalytic core is composed of four subunits: alpha, beta, beta', and beta''. When a (nuclear-encoded) sigma factor is associated with the core the holoenzyme is formed, which can initiate transcription.

Its subcellular location is the plastid. The protein localises to the chloroplast. The enzyme catalyses RNA(n) + a ribonucleoside 5'-triphosphate = RNA(n+1) + diphosphate. DNA-dependent RNA polymerase catalyzes the transcription of DNA into RNA using the four ribonucleoside triphosphates as substrates. This chain is DNA-directed RNA polymerase subunit beta, found in Dioscorea elephantipes (Elephant's foot yam).